The primary structure comprises 313 residues: Pseudouridine kinase (313 aa).

This sequence belongs to the carbohydrate kinase PfkB family.

It catalyses the reaction pseudouridine + ATP = psi-UMP + ADP + H(+). Catalyzes the phosphorylation of pseudouridine to pseudouridine 5'-phosphate (PsiMP). In Escherichia coli (strain K12), this protein is Pseudouridine kinase (psuK).